We begin with the raw amino-acid sequence, 182 residues long: Putative manganese efflux pump MntP (182 aa).

A run of 6 helical transmembrane segments spans residues 6 to 26 (LIPLIIMAFALGMDAFSVSLG), 37 to 57 (ILYIGMTIGIFHIIMPFIGMV), 72 to 92 (FAGAILLIGLGFYIVYSSILE), 101 to 121 (IGISLFVFAFGVSIDSFSVGL), 131 to 151 (IITILLFGLISMLLAWMGLLL), and 162 to 182 (YGEIVGGIILVGFGLYLLFPI).

This sequence belongs to the MntP (TC 9.B.29) family.

The protein resides in the cell membrane. Probably functions as a manganese efflux pump. This Bacillus mycoides (strain KBAB4) (Bacillus weihenstephanensis) protein is Putative manganese efflux pump MntP.